Reading from the N-terminus, the 1626-residue chain is DNA topoisomerase 2-beta (1626 aa).

At A2 the chain carries N-acetylalanine. N6-acetyllysine is present on K3. Residues Q28, N29, K33, and K34 each participate in a glycyl lysine isopeptide (Lys-Gly) (interchain with G-Cter in SUMO2) cross-link. ATP-binding positions include N112, N141, and S169–N171. Glycyl lysine isopeptide (Lys-Gly) (interchain with G-Cter in SUMO2) cross-links involve residues K177 and K178. Position 182-189 (G182–K189) interacts with ATP. Residues K228 and K299 each participate in a glycyl lysine isopeptide (Lys-Gly) (interchain with G-Cter in SUMO2) cross-link. Residues K363 to K365 form an interaction with DNA region. Glycyl lysine isopeptide (Lys-Gly) (interchain with G-Cter in SUMO2) cross-links involve residues K367 and K373. Residue Q397–K399 participates in ATP binding. Glycyl lysine isopeptide (Lys-Gly) (interchain with G-Cter in SUMO2) cross-links involve residues K437, K439, and K446. The Toprim domain maps to C476–E593. Positions 482, 562, and 564 each coordinate Mg(2+). Residues K600, K605, K635, K643, K646, K676, and K712 each participate in a glycyl lysine isopeptide (Lys-Gly) (interchain with G-Cter in SUMO2) cross-link. In terms of domain architecture, Topo IIA-type catalytic spans I736–L1189. The O-(5'-phospho-DNA)-tyrosine intermediate role is filled by Y826. The interval K1011 to S1020 is interaction with DNA. The Nuclear export signal motif lies at E1034–F1044. K1092 is covalently cross-linked (Glycyl lysine isopeptide (Lys-Gly) (interchain with G-Cter in SUMO2)). The tract at residues A1110–G1140 is disordered. Residues K1214, K1217, K1226, and K1227 each participate in a glycyl lysine isopeptide (Lys-Gly) (interchain with G-Cter in SUMO2) cross-link. Residue S1236 is modified to Phosphoserine. Glycyl lysine isopeptide (Lys-Gly) (interchain with G-Cter in SUMO2) cross-links involve residues K1250, K1262, and K1271. The disordered stretch occupies residues F1274–R1604. At T1292 the chain carries Phosphothreonine. Glycyl lysine isopeptide (Lys-Gly) (interchain with G-Cter in SUMO2) cross-links involve residues K1323 and K1327. Basic and acidic residues-rich tracts occupy residues P1334 to S1344 and S1358 to Y1370. A phosphoserine mark is found at S1336, S1340, S1342, S1344, and S1358. The residue at position 1370 (Y1370) is a Phosphotyrosine. A compositionally biased stretch (acidic residues) spans F1374–L1392. S1375 carries the post-translational modification Phosphoserine. K1398 is covalently cross-linked (Glycyl lysine isopeptide (Lys-Gly) (interchain with G-Cter in SUMO2)). The residue at position 1400 (S1400) is a Phosphoserine. Phosphothreonine is present on T1403. S1413 is modified (phosphoserine). At Y1421 the chain carries Phosphotyrosine. Position 1424 is a phosphoserine (S1424). The span at A1430 to Q1442 shows a compositional bias: basic and acidic residues. A Glycyl lysine isopeptide (Lys-Gly) (interchain with G-Cter in SUMO2) cross-link involves residue K1440. 3 positions are modified to phosphoserine: S1441, S1452, and S1454. Residue K1456 forms a Glycyl lysine isopeptide (Lys-Gly) (interchain with G-Cter in SUMO2) linkage. Over residues K1456–S1466 the composition is skewed to basic and acidic residues. Residues S1461, S1466, S1473, and S1476 each carry the phosphoserine modification. K1490 participates in a covalent cross-link: Glycyl lysine isopeptide (Lys-Gly) (interchain with G-Cter in SUMO2). The tract at residues K1506 to K1512 is interaction with PLSCR1. Residues S1522, S1524, and S1526 each carry the phosphoserine modification. Residues G1539–A1549 show a composition bias toward basic residues. 2 positions are modified to phosphoserine: S1550 and S1552. Over residues K1563–K1574 the composition is skewed to basic residues. T1575 bears the Phosphothreonine mark. Phosphoserine occurs at positions 1576 and 1581. T1592 bears the Phosphothreonine mark. S1596 is subject to Phosphoserine. Y1609 bears the Phosphotyrosine mark. S1613 is modified (phosphoserine).

The protein belongs to the type II topoisomerase family. In terms of assembly, homodimer. Interacts with KIAA1210. Interacts with PLSCR1. Requires Mg(2+) as cofactor. Mn(2+) serves as cofactor. It depends on Ca(2+) as a cofactor. Post-translationally, (Microbial infection) Deubiquitinated by Epstein-Barr virus BPLF1; leading to stabilized SUMOylated TOP2A trapped in cleavage complexes, which halts the DNA damage response to TOP2A-induced double-strand DNA breaks. SUMOylated. Expressed in the tonsil, spleen, lymph node, thymus, skin, pancreas, testis, colon, kidney, liver, brain and lung. Also found in breast, colon and lung carcinomas, Hodgkin's disease, large-cell non-Hodgkin's lymphoma, lymphocytic lymphomas and seminomas.

The protein localises to the nucleus. It is found in the nucleolus. The protein resides in the nucleoplasm. The enzyme catalyses ATP-dependent breakage, passage and rejoining of double-stranded DNA.. Its function is as follows. Key decatenating enzyme that alters DNA topology by binding to two double-stranded DNA molecules, generating a double-stranded break in one of the strands, passing the intact strand through the broken strand, and religating the broken strand. Plays a role in B-cell differentiation. This chain is DNA topoisomerase 2-beta (TOP2B), found in Homo sapiens (Human).